Here is a 37-residue protein sequence, read N- to C-terminus: Palicourein (37 aa).

The cyclopeptide (Gly-Asn) cross-link spans 1–37; sequence GDPTFCGETCRVIPVCTYSAALGCTCDDRSDGLCKRN. Cystine bridges form between cysteine 6–cysteine 24, cysteine 10–cysteine 26, and cysteine 16–cysteine 34.

Belongs to the cyclotide family. This is a cyclic peptide.

In terms of biological role, probably participates in a plant defense mechanism. Inhibits the cytopathic effects of the human immunodeficiency virus. In Palicourea condensata (Cappel), this protein is Palicourein.